A 225-amino-acid chain; its full sequence is UPF0758 protein Vapar_4033 (225 aa).

One can recognise an MPN domain in the interval 103-225; the sequence is VFDSPGTVKQ…SYSMAEKGLL (123 aa). Zn(2+)-binding residues include H174, H176, and D187. The JAMM motif signature appears at 174 to 187; it reads HNHPSGSIEPSRAD.

The protein belongs to the UPF0758 family.

This Variovorax paradoxus (strain S110) protein is UPF0758 protein Vapar_4033.